Reading from the N-terminus, the 322-residue chain is Cyanophycinase (322 aa).

Catalysis depends on charge relay system residues Ser-178, Glu-196, and His-220.

Belongs to the peptidase S51 family.

The enzyme catalyses [L-4-(L-arginin-2-N-yl)aspartate](n) + H2O = [L-4-(L-arginin-2-N-yl)aspartate](n-1) + L-4-(L-arginin-2-N-yl)aspartate. In terms of biological role, exopeptidase that catalyzes the hydrolytic cleavage of multi-L-arginyl-poly-L-aspartic acid (cyanophycin; a water-insoluble reserve polymer) into aspartate-arginine dipeptides. The chain is Cyanophycinase (cphB) from Synechococcus elongatus.